Here is a 134-residue protein sequence, read N- to C-terminus: Small ribosomal subunit protein bS6 (134 aa).

The segment at 103-134 is disordered; the sequence is AAPVKSAEEGTEEVAAEAATEAPAETTTTVEV. A compositionally biased stretch (low complexity) spans 118-134; it reads AEAATEAPAETTTTVEV.

This sequence belongs to the bacterial ribosomal protein bS6 family.

In terms of biological role, binds together with bS18 to 16S ribosomal RNA. The chain is Small ribosomal subunit protein bS6 from Geobacter sp. (strain M21).